Consider the following 366-residue polypeptide: Histone-lysine N-methyltransferase SETD7 (366 aa).

MORN repeat units follow at residues 36–58, 59–81, and 106–128; these read FEGH…DGST, LEGF…DGGS, and FKGQ…DGGS. The 123-residue stretch at 214–336 folds into the SET domain; it reads ERVYVNDSLI…KDEELTVAYG (123 aa). Residues 226 to 228, N296, and H297 contribute to the S-adenosyl-L-methionine site; that span reads AGE.

It belongs to the class V-like SAM-binding methyltransferase superfamily. Histone-lysine methyltransferase family. SET7 subfamily.

It is found in the nucleus. It localises to the chromosome. It carries out the reaction L-lysyl(4)-[histone H3] + S-adenosyl-L-methionine = N(6)-methyl-L-lysyl(4)-[histone H3] + S-adenosyl-L-homocysteine + H(+). The enzyme catalyses L-lysyl-[protein] + S-adenosyl-L-methionine = N(6)-methyl-L-lysyl-[protein] + S-adenosyl-L-homocysteine + H(+). Its function is as follows. Histone methyltransferase that specifically monomethylates 'Lys-4' of histone H3. H3 'Lys-4' methylation represents a specific tag for epigenetic transcriptional activation. Plays a central role in the transcriptional activation of genes. Also has methyltransferase activity toward non-histone proteins. The protein is Histone-lysine N-methyltransferase SETD7 (setd7) of Xenopus tropicalis (Western clawed frog).